Here is a 463-residue protein sequence, read N- to C-terminus: Interferon-inducible GTPase 5 (463 aa).

One can recognise an IRG-type G domain in the interval 53-235 (IRLEVGVTGE…PTLVSTWEHD (183 aa)). GTP contacts are provided by residues 62–69 (ESGAGKSS), 87–91 (TGVME), 169–171 (KVD), and 216–218 (SNL). 2 positions are modified to phosphoserine: serine 247 and serine 304. The tract at residues 404–437 (LEDDEPQPEVSLEVASDNGVEKGGSGEGGGEEAP) is disordered.

The protein belongs to the TRAFAC class dynamin-like GTPase superfamily. IRG family. Abundantly expressed in semen (at protein level).

Its subcellular location is the cell projection. The protein resides in the cilium. The protein localises to the flagellum. It is found in the lipid droplet. The enzyme catalyses GTP + H2O = GDP + phosphate + H(+). Functionally, required for sperm motility and therefore male fertility, via positive regulation of spermatozoa fibrous sheath formation. This is Interferon-inducible GTPase 5 from Homo sapiens (Human).